A 148-amino-acid polypeptide reads, in one-letter code: MNLSSLKPAEGAVKSRKRIGRGPGSGLGGTSTRGHKGAKSRSGYSKKIGFEGGQMPIQRRLPKFGFKNINRVEYKPINLSVLQTLSEANSLSKISVEDLIAAGLVSRNSLVKILANGTVTTALTVEAHAFSKTAEEAIVRAGGSVVKL.

The disordered stretch occupies residues 1–51 (MNLSSLKPAEGAVKSRKRIGRGPGSGLGGTSTRGHKGAKSRSGYSKKIGFE). Positions 21 to 31 (RGPGSGLGGTS) are enriched in gly residues.

The protein belongs to the universal ribosomal protein uL15 family. As to quaternary structure, part of the 50S ribosomal subunit.

Functionally, binds to the 23S rRNA. This is Large ribosomal subunit protein uL15 from Porphyromonas gingivalis (strain ATCC 33277 / DSM 20709 / CIP 103683 / JCM 12257 / NCTC 11834 / 2561).